Here is a 451-residue protein sequence, read N- to C-terminus: Trigger factor (451 aa).

The PPIase FKBP-type domain occupies 165 to 250; sequence DDKLTIDFEG…LHQIQAREAL (86 aa).

Belongs to the FKBP-type PPIase family. Tig subfamily.

The protein resides in the cytoplasm. The enzyme catalyses [protein]-peptidylproline (omega=180) = [protein]-peptidylproline (omega=0). Involved in protein export. Acts as a chaperone by maintaining the newly synthesized protein in an open conformation. Functions as a peptidyl-prolyl cis-trans isomerase. This is Trigger factor from Helicobacter pylori (strain G27).